Consider the following 301-residue polypeptide: Oxygen-dependent coproporphyrinogen-III oxidase (301 aa).

Position 90 (serine 90) interacts with substrate. Positions 94 and 104 each coordinate a divalent metal cation. Histidine 104 acts as the Proton donor in catalysis. 106–108 (NVR) serves as a coordination point for substrate. The a divalent metal cation site is built by histidine 143 and histidine 173. The interval 238 to 273 (YVEFNLVWDRGTLFGLQSGGRTESILMSLPPIVKWR) is important for dimerization. A substrate-binding site is contributed by 256-258 (GGR).

It belongs to the aerobic coproporphyrinogen-III oxidase family. In terms of assembly, homodimer. A divalent metal cation is required as a cofactor.

It localises to the cytoplasm. The catalysed reaction is coproporphyrinogen III + O2 + 2 H(+) = protoporphyrinogen IX + 2 CO2 + 2 H2O. The protein operates within porphyrin-containing compound metabolism; protoporphyrin-IX biosynthesis; protoporphyrinogen-IX from coproporphyrinogen-III (O2 route): step 1/1. Involved in the heme biosynthesis. Catalyzes the aerobic oxidative decarboxylation of propionate groups of rings A and B of coproporphyrinogen-III to yield the vinyl groups in protoporphyrinogen-IX. The chain is Oxygen-dependent coproporphyrinogen-III oxidase from Nitrosomonas eutropha (strain DSM 101675 / C91 / Nm57).